The chain runs to 1132 residues: DNA-directed RNA polymerase I subunit RPA2 (1132 aa).

The segment at 1067–1098 (CMDCGSLLSPLLEKPPPNWSATRHRKTICLLC) adopts a C4-type zinc-finger fold.

Belongs to the RNA polymerase beta chain family. As to quaternary structure, component of the RNA polymerase I (Pol I) complex consisting of at least 13 subunits.

The protein resides in the nucleus. It localises to the nucleolus. It is found in the chromosome. The catalysed reaction is RNA(n) + a ribonucleoside 5'-triphosphate = RNA(n+1) + diphosphate. In terms of biological role, DNA-dependent RNA polymerase catalyzes the transcription of DNA into RNA using the four ribonucleoside triphosphates as substrates. Second largest core component of RNA polymerase I which synthesizes ribosomal RNA precursors. Proposed to contribute to the polymerase catalytic activity and forms the polymerase active center together with the largest subunit. Pol I is composed of mobile elements and RPA2 is part of the core element with the central large cleft and probably a clamp element that moves to open and close the cleft. This chain is DNA-directed RNA polymerase I subunit RPA2 (polr1b), found in Danio rerio (Zebrafish).